The primary structure comprises 695 residues: G-protein coupled receptor-associated protein LMBRD2 (695 aa).

Over 1 to 5 (MSGAA) the chain is Extracellular. Residues 6–21 (LGLEIVFVFFLALFLL) traverse the membrane as a helical segment. Over 22–32 (HRYGDFKKQHR) the chain is Cytoplasmic. Residues 33 to 53 (LVIIGTLLAWYLCFLIVFILP) form a helical membrane-spanning segment. Residues 54–105 (LDVSTTIYNRCKHAAANSSPPENSNITGLYATANPVPSQHPCFKPWSYIPDG) lie on the Extracellular side of the membrane. An N-linked (GlcNAc...) asparagine glycan is attached at asparagine 78. The chain crosses the membrane as a helical span at residues 106-126 (IMPIFWRVVYWTSQFLTWILL). The Cytoplasmic segment spans residues 127–150 (PFMQSYARSGGFSITGKIKTALIE). A helical membrane pass occupies residues 151–171 (NAIYYGTYLLIFGAFLIYVAV). The Extracellular segment spans residues 172-186 (NPHLHLEWNQLQTIG). A helical transmembrane segment spans residues 187–207 (IAAANTWGLFLLVLLLGYGLV). Residues 208 to 387 (EIPRSYWNGA…ECLLRPWFYK (180 aa)) lie on the Cytoplasmic side of the membrane. The stretch at 227–262 (YFKAAKLMTEKADAEENLEDAMEEVRKVNESIKYNH) forms a coiled coil. The helical transmembrane segment at 388–408 (ILAVVLSIFSVIVVWSECTFF) threads the bilayer. At 409–432 (STTPVLSLFAVFIQLAEKTYNYIY) the chain is on the extracellular side. Residues 433 to 453 (IEIACFLSIFFLSICVYSTVF) form a helical membrane-spanning segment. Over 454 to 473 (RIRVFNYYYLASHHQTDAYS) the chain is Cytoplasmic. Residues 474–494 (LLFSGMLFCRLTPPLCLNFLG) form a helical membrane-spanning segment. Over 495 to 521 (LTHMDSSISHKNTQPTAYTSIMGSMKV) the chain is Extracellular. A helical transmembrane segment spans residues 522–542 (LSFIADGFYIYYPMLVVILCI). The Cytoplasmic portion of the chain corresponds to 543–695 (ATYFSLGTRC…MSRSDIFNDV (153 aa)). Residues 571 to 603 (LVNEGKELIRKEKRKRQRQEEGENRRREWKERY) adopt a coiled-coil conformation. Positions 581-628 (KEKRKRQRQEEGENRRREWKERYGHNREDSTRNRNIHTDPKESNFSDV) are disordered. Basic and acidic residues predominate over residues 588-624 (RQEEGENRRREWKERYGHNREDSTRNRNIHTDPKESN). At serine 633 the chain carries Phosphoserine. Positions 662–682 (AETFTDDPLESESGRYQPGGR) are disordered.

The protein belongs to the LIMR family.

It is found in the cell membrane. Its function is as follows. Recruited to ligand-activated beta-2 adrenergic receptor/ADRB2, it negatively regulates the adrenergic receptor signaling pathway. May also regulate other G-protein coupled receptors including type-1 angiotensin II receptor/AGTR1. This Homo sapiens (Human) protein is G-protein coupled receptor-associated protein LMBRD2.